We begin with the raw amino-acid sequence, 127 residues long: Large ribosomal subunit protein eL8 (127 aa).

The protein belongs to the eukaryotic ribosomal protein eL8 family. In terms of assembly, part of the 50S ribosomal subunit. Probably part of the RNase P complex.

It localises to the cytoplasm. In terms of biological role, multifunctional RNA-binding protein that recognizes the K-turn motif in ribosomal RNA, the RNA component of RNase P, box H/ACA, box C/D and box C'/D' sRNAs. In Picrophilus torridus (strain ATCC 700027 / DSM 9790 / JCM 10055 / NBRC 100828 / KAW 2/3), this protein is Large ribosomal subunit protein eL8.